The chain runs to 115 residues: Large ribosomal subunit protein bL19 (115 aa).

Belongs to the bacterial ribosomal protein bL19 family.

In terms of biological role, this protein is located at the 30S-50S ribosomal subunit interface and may play a role in the structure and function of the aminoacyl-tRNA binding site. The sequence is that of Large ribosomal subunit protein bL19 from Francisella tularensis subsp. holarctica (strain FTNF002-00 / FTA).